A 400-amino-acid polypeptide reads, in one-letter code: Arabinan endo-1,5-alpha-L-arabinosidase B (400 aa).

Positions 1–16 (MAVIFVLFFLVSMALS) are cleaved as a signal peptide. N-linked (GlcNAc...) asparagine glycosylation occurs at N24. D70 (proton acceptor) is an active-site residue. An N-linked (GlcNAc...) asparagine glycan is attached at N184. E277 serves as the catalytic Proton donor. N-linked (GlcNAc...) asparagine glycosylation is present at N372.

Belongs to the glycosyl hydrolase 43 family.

The protein localises to the secreted. The enzyme catalyses Endohydrolysis of (1-&gt;5)-alpha-arabinofuranosidic linkages in (1-&gt;5)-arabinans.. It functions in the pathway glycan metabolism; L-arabinan degradation. Its function is as follows. Endo-1,5-alpha-L-arabinanase involved in degradation of pectin. Its preferred substrate is linear 1,5-alpha-L-arabinan. The protein is Arabinan endo-1,5-alpha-L-arabinosidase B (abnB) of Emericella nidulans (strain FGSC A4 / ATCC 38163 / CBS 112.46 / NRRL 194 / M139) (Aspergillus nidulans).